Reading from the N-terminus, the 226-residue chain is Large ribosomal subunit protein uL1 (226 aa).

This sequence belongs to the universal ribosomal protein uL1 family. As to quaternary structure, part of the 50S ribosomal subunit.

In terms of biological role, binds directly to 23S rRNA. The L1 stalk is quite mobile in the ribosome, and is involved in E site tRNA release. Functionally, protein L1 is also a translational repressor protein, it controls the translation of the L11 operon by binding to its mRNA. In Borreliella burgdorferi (strain ATCC 35210 / DSM 4680 / CIP 102532 / B31) (Borrelia burgdorferi), this protein is Large ribosomal subunit protein uL1.